Here is a 1142-residue protein sequence, read N- to C-terminus: Melanoma-associated antigen C1 (1142 aa).

The tract at residues 1–132 is disordered; it reads MGDKDMPTAG…DVQSPLQNPA (132 aa). Residues 13–42 show a composition bias toward low complexity; sequence SLLQSSSESPQSCPEGEDSQSPLQIPQSSP. Ser-63 is modified (phosphoserine). Low complexity predominate over residues 76–87; it reads SQSPLQIPQSSP. Polar residues predominate over residues 92–103; that stretch reads TQSPLQNSQSSP. Residues Ser-207 and Ser-382 each carry the phosphoserine modification. 2 disordered regions span residues 502–778 and 791–893; these read TQST…LQRP and LQSS…SLTD. Over residues 614–626 the composition is skewed to polar residues; it reads SPLQGEEFQSSLQ. Residues 627–659 are compositionally biased toward low complexity; the sequence is SPVSICSSSTPSSLPQSFPESSQSPPEGPVQSP. Residues 671 to 680 are compositionally biased toward polar residues; it reads HSQSPLQSPE. 2 stretches are compositionally biased toward low complexity: residues 741-762 and 807-889; these read QSPV…FPES and QSPL…LESD. In terms of domain architecture, MAGE spans 908–1106; the sequence is LDEKVDELAR…ITFPSSYKDA (199 aa). Ser-1063 bears the Phosphoserine mark. A disordered region spans residues 1118-1142; that stretch reads IDTTDDSTATESASSSVMSPSFSSE. Over residues 1123–1142 the composition is skewed to low complexity; it reads DSTATESASSSVMSPSFSSE.

In terms of tissue distribution, expressed in testis and in tumors of a wide variety of histologic types.

The protein localises to the cytoplasm. This is Melanoma-associated antigen C1 (MAGEC1) from Homo sapiens (Human).